We begin with the raw amino-acid sequence, 191 residues long: Inosine triphosphate pyrophosphatase (191 aa).

ITP is bound at residue 15–20 (TGNTNK). Position 43 (E43) interacts with Mg(2+). Residues K55, 71 to 72 (DT), K88, 147 to 150 (FGWD), K168, and 173 to 174 (HR) each bind ITP.

It belongs to the HAM1 NTPase family. As to quaternary structure, homodimer. Mg(2+) is required as a cofactor. It depends on Mn(2+) as a cofactor.

The protein localises to the cytoplasm. Its subcellular location is the nucleus. The catalysed reaction is ITP + H2O = IMP + diphosphate + H(+). It carries out the reaction dITP + H2O = dIMP + diphosphate + H(+). It catalyses the reaction XTP + H2O = XMP + diphosphate + H(+). Functionally, pyrophosphatase that hydrolyzes non-canonical purine nucleotides such as inosine triphosphate (ITP), deoxyinosine triphosphate (dITP) or xanthosine 5'-triphosphate (XTP) to their respective monophosphate derivatives. The enzyme does not distinguish between the deoxy- and ribose forms. Probably excludes non-canonical purines from RNA and DNA precursor pools, thus preventing their incorporation into RNA and DNA and avoiding chromosomal lesions. This Chaetomium globosum (strain ATCC 6205 / CBS 148.51 / DSM 1962 / NBRC 6347 / NRRL 1970) (Soil fungus) protein is Inosine triphosphate pyrophosphatase.